The sequence spans 183 residues: Apo-citrate lyase phosphoribosyl-dephospho-CoA transferase (183 aa).

This sequence belongs to the CitX family.

It carries out the reaction apo-[citrate lyase ACP] + 2'-(5''-triphospho-alpha-D-ribosyl)-3'-dephospho-CoA = holo-[citrate lyase ACP] + diphosphate. Transfers 2-(5''-triphosphoribosyl)-3'-dephosphocoenzyme-A on a serine residue to the apo-acyl carrier protein (gamma chain) of the citrate lyase to yield holo-acyl carrier protein. This Escherichia coli O45:K1 (strain S88 / ExPEC) protein is Apo-citrate lyase phosphoribosyl-dephospho-CoA transferase.